Reading from the N-terminus, the 216-residue chain is MSLVGGFPHHPVVHHEGYPLRRRRCRRRRRHPLRPRGEPLLHGWLISSHPEMSPPDYSMALSYSPEYANGAPGMDHSHYGGVPPGSGPPGLGGPRPVKRRGTANRKERRRTQSINSAFAELRECIPNVPADTKLSKIKTLRLATSYIAYLMDLLPKDDQNGEAEAFKAEIKKTDVKEEKRKKELNEILKSTVSSSDKKTKGRTGWPQHVWALELKQ.

The disordered stretch occupies residues 74–115; the sequence is MDHSHYGGVPPGSGPPGLGGPRPVKRRGTANRKERRRTQSIN. Positions 82–93 are enriched in gly residues; it reads VPPGSGPPGLGG. Residues 96 to 111 are compositionally biased toward basic residues; it reads PVKRRGTANRKERRRT. The region spanning 98-150 is the bHLH domain; the sequence is KRRGTANRKERRRTQSINSAFAELRECIPNVPADTKLSKIKTLRLATSYIAYL.

Efficient DNA binding requires dimerization with another bHLH protein.

It is found in the nucleus. Functionally, essential for cardiac morphogenesis. Binds DNA on E-box consensus sequence 5'-CANNTG-3'. Plays an important role in limb development, particularly in the establishment of anterior-posterior polarization of the limb bud. The chain is Heart- and neural crest derivatives-expressed protein 2 (HAND2) from Gallus gallus (Chicken).